Consider the following 181-residue polypeptide: Small ribosomal subunit protein uS4 (181 aa).

In terms of domain architecture, S4 RNA-binding spans 108–177 (RRLQTMVYRQ…EGHPEIERIN (70 aa)). Residues 161-181 (GTSPLTSEGHPEIERINKKRR) form a disordered region. Residues 169 to 181 (GHPEIERINKKRR) are compositionally biased toward basic and acidic residues.

Belongs to the universal ribosomal protein uS4 family. As to quaternary structure, part of the 30S ribosomal subunit. Contacts protein S5. The interaction surface between S4 and S5 is involved in control of translational fidelity.

In terms of biological role, one of the primary rRNA binding proteins, it binds directly to 16S rRNA where it nucleates assembly of the body of the 30S subunit. Its function is as follows. With S5 and S12 plays an important role in translational accuracy. The sequence is that of Small ribosomal subunit protein uS4 from Methanosphaerula palustris (strain ATCC BAA-1556 / DSM 19958 / E1-9c).